Consider the following 718-residue polypeptide: Centromere/kinetochore protein zw10 (718 aa).

This sequence belongs to the ZW10 family.

It localises to the cytoplasm. It is found in the nucleus. The protein resides in the chromosome. Its subcellular location is the centromere. The protein localises to the kinetochore. Functionally, required for accurate chromosome segregation. This is Centromere/kinetochore protein zw10 (mit(1)15) from Drosophila pseudoobscura pseudoobscura (Fruit fly).